Here is a 189-residue protein sequence, read N- to C-terminus: Small ribosomal subunit protein uS7 (189 aa).

This sequence belongs to the universal ribosomal protein uS7 family. As to quaternary structure, part of the 30S ribosomal subunit.

Functionally, one of the primary rRNA binding proteins, it binds directly to 16S rRNA where it nucleates assembly of the head domain of the 30S subunit. Is located at the subunit interface close to the decoding center. The sequence is that of Small ribosomal subunit protein uS7 from Methanosarcina acetivorans (strain ATCC 35395 / DSM 2834 / JCM 12185 / C2A).